The following is a 307-amino-acid chain: MLQTPESRGLPVPQAEGEKDGGHDGETRAPTASQERPKEELGAGREEGAAEPALTRKGARALAAKALARRRAYRRLNRTVAELVQFLLVKDKKKSPITRSEMVKYVIGDLKILFPDIIARAAEHLRYVFGFELKQFDRKHHTYILINKLKPLEEEEEEDLGGDGPRLGLLMMILGLIYMRGNSAREAQVWEMLRRLGVQPSKYHFLFGYPKRLIMEDFVQQRYLSYRRVPHTNPPEYEFSWGPRSNLEISKMEVLGFVAKLHKKEPQHWPVQYREALADEADRARAKARAEASMRARASARAGIHLW.

Positions 1–55 (MLQTPESRGLPVPQAEGEKDGGHDGETRAPTASQERPKEELGAGREEGAAEPALT) are disordered. 2 stretches are compositionally biased toward basic and acidic residues: residues 16–27 (EGEKDGGHDGET) and 35–48 (ERPK…REEG). Residues 76-277 (LNRTVAELVQ…HWPVQYREAL (202 aa)) enclose the MAGE domain.

Interacts (via MAGE domain) with RING-type zinc finger-containing E3 ubiquitin-protein ligases LNX1, TRIM27 and NSMCE1; the interaction is direct. As to expression, ubiquitous.

In terms of biological role, enhances ubiquitin ligase activity of RING-type zinc finger-containing E3 ubiquitin ligases. Proposed to act through recruitment and/or stabilization of the E2 ubiquitin-conjugating enzyme at the E3:substrate complex. MAGEF1-NSMCE1 ubiquitin ligase complex promotes proteasomal degradation of MMS19, a key component of the cytosolic iron-sulfur protein assembly (CIA) machinery. Down-regulation of MMS19 impairs the activity of several DNA repair and metabolism enzymes such as ERCC2/XPD, FANCJ, RTEL1 and POLD1 that require iron-sulfur clusters as cofactors. May negatively regulate genome integrity by inhibiting homologous recombination-mediated double-strand break DNA repair. This chain is Melanoma-associated antigen F1, found in Homo sapiens (Human).